Consider the following 212-residue polypeptide: Ferric nitrobindin-like protein (212 aa).

The segment covering 1 to 11 has biased composition (basic and acidic residues); sequence MTSSDQPERGS. Residues 1-36 form a disordered region; sequence MTSSDQPERGSGDAAVQAAAERAEQTRGRNVPQFDD. Positions 64-70 match the GXWXGXG motif; sequence GVWRGDG.

This sequence belongs to the nitrobindin family.

The protein is Ferric nitrobindin-like protein of Saccharopolyspora erythraea (strain ATCC 11635 / DSM 40517 / JCM 4748 / NBRC 13426 / NCIMB 8594 / NRRL 2338).